The chain runs to 346 residues: Phosphoribosylformylglycinamidine cyclo-ligase (346 aa).

It belongs to the AIR synthase family.

The protein resides in the cytoplasm. It carries out the reaction 2-formamido-N(1)-(5-O-phospho-beta-D-ribosyl)acetamidine + ATP = 5-amino-1-(5-phospho-beta-D-ribosyl)imidazole + ADP + phosphate + H(+). Its pathway is purine metabolism; IMP biosynthesis via de novo pathway; 5-amino-1-(5-phospho-D-ribosyl)imidazole from N(2)-formyl-N(1)-(5-phospho-D-ribosyl)glycinamide: step 2/2. The protein is Phosphoribosylformylglycinamidine cyclo-ligase of Vibrio atlanticus (strain LGP32) (Vibrio splendidus (strain Mel32)).